The primary structure comprises 262 residues: Acidic leucine-rich nuclear phosphoprotein 32 family member B (262 aa).

LRR repeat units follow at residues 16–40, 43–64, 65–87, and 89–110; these read PGEV…LSSD, NLEF…PKLN, KLRK…AERT, and NLTH…EPLK. Residues 123 to 161 enclose the LRRCT domain; the sequence is CEVTMLINYRESVFTLLPQLTYLDGFDADEQEAPDSDPE. A compositionally biased stretch (acidic residues) spans 150–233; the sequence is ADEQEAPDSD…EDEEDDEADD (84 aa). The interval 150-262 is disordered; that stretch reads ADEQEAPDSD…PEDEEDDEDD (113 aa). A Nuclear localization signal motif is present at residues 240–243; that stretch reads KRKR. The segment covering 247 to 262 has biased composition (acidic residues); that stretch reads DEGEEDPEDEEDDEDD.

This sequence belongs to the ANP32 family. Interacts with histones H3 and H4. Interacts with KLF5; this interaction induces promoter region-specific histone incorporation and inhibition of histone acetylation by ANP32B. Directly cleaved by caspase-3/CASP3.

It is found in the nucleus. Functionally, multifunctional protein that is involved in the regulation of many processes including cell proliferation, apoptosis, cell cycle progression or transcription. Regulates the proliferation of neuronal stem cells, differentiation of leukemic cells and progression from G1 to S phase of the cell cycle. As negative regulator of caspase-3-dependent apoptosis, may act as an antagonist of ANP32A in regulating tissue homeostasis. Exhibits histone chaperone properties, able to recruit histones to certain promoters, thus regulating the transcription of specific genes. Also plays an essential role in the nucleocytoplasmic transport of specific mRNAs via the uncommon nuclear mRNA export receptor XPO1/CRM1. This chain is Acidic leucine-rich nuclear phosphoprotein 32 family member B (ANP32B), found in Gallus gallus (Chicken).